We begin with the raw amino-acid sequence, 327 residues long: 2-methoxy-6-polyprenyl-1,4-benzoquinol methylase, mitochondrial (327 aa).

The transit peptide at 1–49 directs the protein to the mitochondrion; sequence MAAPRSCVLWSYCGHGWSRLAGDCRLPGFRRSWLGATLSARSLSQEKRA. Residues threonine 117, aspartate 171, and 199–200 each bind S-adenosyl-L-methionine; that span reads DA.

This sequence belongs to the class I-like SAM-binding methyltransferase superfamily. MenG/UbiE family. In terms of assembly, component of a multi-subunit COQ enzyme complex, composed of at least COQ3, COQ4, COQ5, COQ6, COQ7 and COQ9. Interacts with PYURF; the interaction is direct, stabilizes COQ5 protein and associates PYURF with COQ enzyme complex.

Its subcellular location is the mitochondrion inner membrane. The enzyme catalyses 2-methoxy-6-(all-trans-decaprenyl)benzene-1,4-diol + S-adenosyl-L-methionine = 5-methoxy-2-methyl-3-(all-trans-decaprenyl)benzene-1,4-diol + S-adenosyl-L-homocysteine + H(+). Its pathway is cofactor biosynthesis; ubiquinone biosynthesis. Functionally, methyltransferase required for the conversion of 2-decaprenyl-6-methoxy-1,4-benzoquinol (DDMQH2) to 2-decaprenyl-3-methyl-6-methoxy-1,4-benzoquinol (DMQH2). The sequence is that of 2-methoxy-6-polyprenyl-1,4-benzoquinol methylase, mitochondrial from Rattus norvegicus (Rat).